Here is a 328-residue protein sequence, read N- to C-terminus: UPF0421 protein SERP1427 (328 aa).

Transmembrane regions (helical) follow at residues 26 to 46 (LFCM…IVTI), 61 to 81 (LPAT…FGDQ), 109 to 129 (AVLT…FNFF), and 132 to 152 (LLTA…ILPP).

The protein belongs to the UPF0421 family.

It localises to the cell membrane. This chain is UPF0421 protein SERP1427, found in Staphylococcus epidermidis (strain ATCC 35984 / DSM 28319 / BCRC 17069 / CCUG 31568 / BM 3577 / RP62A).